Reading from the N-terminus, the 259-residue chain is MLTVRIIPCLDVNKGRVVKGVNFLNLVDAGDPVELAAFYDREGADEVVFLDITASFEGRQTMVEVAKRTATTLSIPFTIGGGIRNIDDIRALLASGADKVSINSAAVKNPELVREAALKFGSQCIVVAIDAKRKKDGGFEVYIHGGRTPTGIDAVEWAKEVERLGAGEILLTSMDRDGTKDGYDLELTREIADAVKIPVIASGGVGELSHFYEGVVLGHASALLAASVFHFGKFTIKEVKRYLKERGIPVRLGDTENGT.

Catalysis depends on residues aspartate 11 and aspartate 130.

Belongs to the HisA/HisF family. As to quaternary structure, heterodimer of HisH and HisF.

The protein resides in the cytoplasm. It catalyses the reaction 5-[(5-phospho-1-deoxy-D-ribulos-1-ylimino)methylamino]-1-(5-phospho-beta-D-ribosyl)imidazole-4-carboxamide + L-glutamine = D-erythro-1-(imidazol-4-yl)glycerol 3-phosphate + 5-amino-1-(5-phospho-beta-D-ribosyl)imidazole-4-carboxamide + L-glutamate + H(+). Its pathway is amino-acid biosynthesis; L-histidine biosynthesis; L-histidine from 5-phospho-alpha-D-ribose 1-diphosphate: step 5/9. IGPS catalyzes the conversion of PRFAR and glutamine to IGP, AICAR and glutamate. The HisF subunit catalyzes the cyclization activity that produces IGP and AICAR from PRFAR using the ammonia provided by the HisH subunit. In Carboxydothermus hydrogenoformans (strain ATCC BAA-161 / DSM 6008 / Z-2901), this protein is Imidazole glycerol phosphate synthase subunit HisF.